Consider the following 819-residue polypeptide: Zinc finger protein with KRAB and SCAN domains 5 (819 aa).

An SCAN box domain is found at 51–132 (QRFKHFQYHE…AVIESIQREL (82 aa)). Residues lysine 214, lysine 246, and lysine 302 each participate in a glycyl lysine isopeptide (Lys-Gly) (interchain with G-Cter in SUMO2) cross-link. The KRAB domain occupies 216 to 287 (EDVADVAVSF…HWVAAERTEK (72 aa)). Disordered stretches follow at residues 236 to 263 (SQKSLGRDSRKEDCESTTPVDYEPKEGN) and 283 to 340 (ERTE…GERG). Residues 240–249 (LGRDSRKEDC) show a composition bias toward basic and acidic residues. Basic and acidic residues predominate over residues 329–340 (VNRKQKSNGERG). 9 C2H2-type zinc fingers span residues 341–363 (HRCGDCGKFFLQASNFIQHRRIH), 369–391 (FKCGECGKSYNQRVHLTQHQRVH), 397–419 (YKCQVCGKAFRVSSHLVQHHSVH), 425–447 (YGCNECGKSFGRHSHLIEHLKRH), 540–562 (HQCNECGKSFIQSAHLIQHRRIH), 568–590 (FRCEECGKSYNQRVHLTQHHRVH), 596–618 (YACHLCGKAFRVRSHLVQHQSVH), 624–646 (FKCNECGKGFGRRSHLAGHLRLH), and 652–674 (HQCHECGEIFFQYVSLLEHQVLH). Residue lysine 700 forms a Glycyl lysine isopeptide (Lys-Gly) (interchain with G-Cter in SUMO2) linkage. 3 consecutive C2H2-type zinc fingers follow at residues 708–730 (YQCDSCGKAFSYSSDLIQHYRTH), 764–786 (HQCNECGRGFSLKSHLSQHQRIH), and 792–814 (LQCKECGMSFSWSCSLFKHLRSH). Lysine 776 is covalently cross-linked (Glycyl lysine isopeptide (Lys-Gly) (interchain with G-Cter in SUMO2)).

It belongs to the krueppel C2H2-type zinc-finger protein family. Testis specific.

It is found in the nucleus. In terms of biological role, may be involved in transcriptional regulation. This Mus musculus (Mouse) protein is Zinc finger protein with KRAB and SCAN domains 5 (Zkscan5).